The chain runs to 159 residues: 17 kDa surface antigen (159 aa).

An N-terminal signal peptide occupies residues 1 to 19 (MKIISKIIVILLAASMLQA). Residue C20 is the site of N-palmitoyl cysteine attachment. C20 carries S-diacylglycerol cysteine lipidation.

The protein belongs to the rickettsiale 17 kDa surface antigen family.

It is found in the cell outer membrane. This chain is 17 kDa surface antigen (omp), found in Rickettsia bellii.